We begin with the raw amino-acid sequence, 256 residues long: Rhamnolipids biosynthesis 3-oxoacyl-[acyl-carrier-protein] reductase (256 aa).

14–38 provides a ligand contact to NADP(+); that stretch reads VTGGSRGIGQMIAQGLLEAGARVFI. Residue Ser148 coordinates substrate. The Proton acceptor role is filled by Tyr162.

Belongs to the short-chain dehydrogenases/reductases (SDR) family.

It carries out the reaction a (3R)-hydroxyacyl-[ACP] + NADP(+) = a 3-oxoacyl-[ACP] + NADPH + H(+). It participates in lipid metabolism; rhamnolipid biosynthesis. Its function is as follows. Required for the synthesis of the beta-hydroxy acid moiety of rhamnolipids. The polypeptide is Rhamnolipids biosynthesis 3-oxoacyl-[acyl-carrier-protein] reductase (rhlG) (Pseudomonas aeruginosa (strain ATCC 15692 / DSM 22644 / CIP 104116 / JCM 14847 / LMG 12228 / 1C / PRS 101 / PAO1)).